The primary structure comprises 192 residues: L-2,4-diaminobutyric acid acetyltransferase (192 aa).

In terms of domain architecture, N-acetyltransferase spans 31–192; the sequence is LFIRKPSPDD…RIGPFQTDQI (162 aa).

This sequence belongs to the acetyltransferase family. EctA subfamily.

It catalyses the reaction L-2,4-diaminobutanoate + acetyl-CoA = (2S)-4-acetamido-2-aminobutanoate + CoA + H(+). The protein operates within amine and polyamine biosynthesis; ectoine biosynthesis; L-ectoine from L-aspartate 4-semialdehyde: step 2/3. Catalyzes the acetylation of L-2,4-diaminobutyrate (DABA) to gamma-N-acetyl-alpha,gamma-diaminobutyric acid (ADABA) with acetyl coenzyme A. Does not acetylate amino acids like GABA, L-ornithine, L-lysine and L-aspartate. This is L-2,4-diaminobutyric acid acetyltransferase (ectA) from Halomonas elongata (strain ATCC 33173 / DSM 2581 / NBRC 15536 / NCIMB 2198 / 1H9).